The primary structure comprises 423 residues: Pentamidine resistance factor, mitochondrial (423 aa).

A helical transmembrane segment spans residues 199–219; sequence PVFFTLVFIFEEVSVLIFTFF.

Interacts with COX18. This interaction may be essential for its insertion into mitochondrial inner membrane.

The protein resides in the mitochondrion inner membrane. Functionally, probably involved in mitochondrial export. Confers resistance to the anti-pneumocystis carinii drug pentamidine. May act by the removal of pentamidine, or its damage targets, from the matrix by an active-transport mechanism. This Saccharomyces cerevisiae (strain ATCC 204508 / S288c) (Baker's yeast) protein is Pentamidine resistance factor, mitochondrial (PNT1).